The chain runs to 549 residues: MKNINPTQTSAWQALQKHYDEMKDVTIAELFANDSDRFAKFSATFDDLMLVDFSKNRITEETLAKLQDLAKETDLAGAIKSMFSGEKINRTEDRAVLHVALRNRSNTPIIVDGKDVMPEVNAVLEKMKTFSQAIISGQWKGYTGKAITDVVNIGIGGSDLGPFMVTEALRPYKNHLNMHFVSNVDGTHIAEVLKKVNPETTLFLVASKTFTTQETMTNAHSARDWFLKTAGDEKHVAKHFAALSTNAKAVGEFGIDTANMFEFWDWVGGRYSLWSAIGLSIILSVGFDNFVELLSGAHAMDKHFSTTPAEKNLPILLALIGIWYNNFFGAETEAILPYDQYMHRFAAYFQQGNMESNGKYVDRNGNAVDYQTGPIIWGEPGTNGQHAFYQLIHQGTKMVPCDFIAPAITHNPLSDHHQKLLSNFFAQTEALAFGKSREVVEQEYRDQGKDPAQLEHVVPFKVFEGNRPTNSILLREITPFSLGALIALYEHKIFTQGVILNIFTFDQWGVELGKQLANRILPELGDDKAISSHDSSTNGLINRYKAWRA.

The active-site Proton donor is the Glu-355. Active-site residues include His-386 and Lys-514.

It belongs to the GPI family.

Its subcellular location is the cytoplasm. The enzyme catalyses alpha-D-glucose 6-phosphate = beta-D-fructose 6-phosphate. Its pathway is carbohydrate biosynthesis; gluconeogenesis. The protein operates within carbohydrate degradation; glycolysis; D-glyceraldehyde 3-phosphate and glycerone phosphate from D-glucose: step 2/4. In terms of biological role, catalyzes the reversible isomerization of glucose-6-phosphate to fructose-6-phosphate. This Salmonella paratyphi C (strain RKS4594) protein is Glucose-6-phosphate isomerase.